Reading from the N-terminus, the 301-residue chain is Protein FdhE homolog (301 aa).

The protein belongs to the FdhE family.

The protein localises to the cytoplasm. Functionally, necessary for formate dehydrogenase activity. This is Protein FdhE homolog from Shewanella baltica (strain OS195).